A 1161-amino-acid chain; its full sequence is Translation initiation factor IF-2 (1161 aa).

Positions lysine 67 to lysine 561 are disordered. Over residues glutamine 83–asparagine 105 the composition is skewed to basic and acidic residues. Positions serine 139–asparagine 154 are enriched in polar residues. 2 stretches are compositionally biased toward basic and acidic residues: residues asparagine 164–serine 180 and lysine 211–aspartate 220. Composition is skewed to low complexity over residues asparagine 224–lysine 250 and asparagine 268–asparagine 282. Polar residues-rich tracts occupy residues arginine 295–serine 311, arginine 352–proline 362, and leucine 380–serine 393. Over residues alanine 412 to lysine 432 the composition is skewed to basic and acidic residues. A compositionally biased stretch (polar residues) spans serine 440–lysine 461. Basic and acidic residues-rich tracts occupy residues glycine 464–arginine 478 and lysine 543–lysine 561. A tr-type G domain is found at lysine 653–glutamate 830. The segment at glycine 662–threonine 669 is G1. Residue glycine 662 to threonine 669 participates in GTP binding. Residues glycine 687–histidine 691 form a G2 region. The interval aspartate 712–glycine 715 is G3. Residues aspartate 712–histidine 716 and asparagine 766–aspartate 769 each bind GTP. Positions asparagine 766–aspartate 769 are G4. The tract at residues serine 802 to isoleucine 804 is G5.

The protein belongs to the TRAFAC class translation factor GTPase superfamily. Classic translation factor GTPase family. IF-2 subfamily.

The protein localises to the cytoplasm. Its function is as follows. One of the essential components for the initiation of protein synthesis. Protects formylmethionyl-tRNA from spontaneous hydrolysis and promotes its binding to the 30S ribosomal subunits. Also involved in the hydrolysis of GTP during the formation of the 70S ribosomal complex. This Prochlorococcus marinus (strain MIT 9515) protein is Translation initiation factor IF-2.